The following is a 244-amino-acid chain: MTELVYEQPLNEKIRSYLRLEYLDKQLQSNLNHDHQHRCFYPLFSLCELSERCDYRNEVLKDIERHLLQLSKWQELDHVDHQQIDLYINALTQAREPLQKPERFGSQLKQDRFISALRQRFGMPGACCNFDLPQLHYWLAKPWEEKQQDYRSWIAHFEPLLTPITLLLQLTRSTAHYDNAVAHAGFYQGDSAQALALVRVKVDASHGCYPTISGHKNRFAIHFVQFEQQRHSDRSIDFLLATCA.

Belongs to the ZapD family. Interacts with FtsZ.

It is found in the cytoplasm. Functionally, cell division factor that enhances FtsZ-ring assembly. Directly interacts with FtsZ and promotes bundling of FtsZ protofilaments, with a reduction in FtsZ GTPase activity. The sequence is that of Cell division protein ZapD from Shewanella baltica (strain OS185).